Here is a 231-residue protein sequence, read N- to C-terminus: Secreted LysM effector LysM13 (231 aa).

An N-terminal signal peptide occupies residues 1 to 19; the sequence is MVFLSLKYALSGLAATAAA. Asparagine 30, asparagine 34, asparagine 77, asparagine 100, asparagine 130, asparagine 201, and asparagine 226 each carry an N-linked (GlcNAc...) asparagine glycan. One can recognise a LysM domain in the interval 38–82; the sequence is TTYTTTSEDTIFTVARKFDRGPCDIARYNRMIDAEHIFANFTLRI.

Belongs to the secreted LysM effector family.

The protein localises to the secreted. Functionally, secreted LysM effector that might have a role in sequestration of chitin oligosaccharides (breakdown products of fungal cell walls that are released during invasion and act as triggers of host immunity) to dampen host defense. This is Secreted LysM effector LysM13 from Penicillium expansum (Blue mold rot fungus).